The following is a 99-amino-acid chain: Nucleoid-associated protein LACR_0106 (99 aa).

Belongs to the YbaB/EbfC family. As to quaternary structure, homodimer.

It localises to the cytoplasm. It is found in the nucleoid. Functionally, binds to DNA and alters its conformation. May be involved in regulation of gene expression, nucleoid organization and DNA protection. This Lactococcus lactis subsp. cremoris (strain SK11) protein is Nucleoid-associated protein LACR_0106.